We begin with the raw amino-acid sequence, 29 residues long: Photosystem I reaction center subunit XII (29 aa).

The chain crosses the membrane as a helical span at residues 7 to 26; sequence IFVALILALFSFVLAIRLGT.

It belongs to the PsaM family.

The protein localises to the plastid. It localises to the chloroplast thylakoid membrane. The polypeptide is Photosystem I reaction center subunit XII (Guillardia theta (Cryptophyte)).